A 163-amino-acid polypeptide reads, in one-letter code: Developmental pluripotency-associated protein 3 (163 aa).

In terms of tissue distribution, preferentially expressed in oocyte.

The protein localises to the nucleus. Its subcellular location is the cytoplasm. Its function is as follows. Primordial germ cell (PGCs)-specific protein involved in epigenetic chromatin reprogramming in the zygote following fertilization. In zygotes, DNA demethylation occurs selectively in the paternal pronucleus before the first cell division, while the adjacent maternal pronucleus and certain paternally-imprinted loci are protected from this process. Participates in protection of DNA methylation in the maternal pronucleus by preventing conversion of 5mC to 5hmC: specifically recognizes and binds histone H3 dimethylated at 'Lys-9' (H3K9me2) on maternal genome, and protects maternal genome from TET3-mediated conversion to 5hmC and subsequent DNA demethylation. Does not bind paternal chromatin, which is mainly packed into protamine and does not contain much H3K9me2 mark. Also protects imprinted loci that are marked with H3K9me2 in mature sperm from DNA demethylation in early embryogenesis. May be important for the totipotent/pluripotent states continuing through preimplantation development. Also involved in chromatin condensation in oocytogenesis. In Bos taurus (Bovine), this protein is Developmental pluripotency-associated protein 3 (DPPA3).